Here is a 385-residue protein sequence, read N- to C-terminus: Basigin (385 aa).

Residues 1-21 form the signal peptide; it reads MAAALFVLLGFALLGTHGASG. The 84-residue stretch at 37–120 folds into the Ig-like domain; the sequence is GGSVELHCEA…SNDPDRNHLT (84 aa). 3 cysteine pairs are disulfide-bonded: Cys44-Cys108, Cys157-Cys203, and Cys242-Cys301. The Ig-like C2-type domain maps to 138–219; sequence EPGTVFTTVE…MGTANIQLHG (82 aa). The Extracellular segment spans residues 138 to 323; that stretch reads EPGTVFTTVE…ITLRVRSHLA (186 aa). Residue Asn160 is glycosylated (N-linked (GlcNAc...) asparagine). An essential for interaction with KDR/VEGFR2 region spans residues 195–199; it reads DDQWG. Positions 221–315 constitute an Ig-like V-type domain; sequence PRVKAVKSSE…SKGSDQAIIT (95 aa). Residues Asn268 and Asn302 are each glycosylated (N-linked (GlcNAc...) asparagine). The chain crosses the membrane as a helical span at residues 324–344; the sequence is ALWPFLGIVAEVLVLVTIIFI. Over 345–385 the chain is Cytoplasmic; that stretch reads YEKRRKPEDVLDDDDAGSAPLKSSGQHQNDKGKNVRQRNSS. Residues 353–385 form a disordered region; it reads DVLDDDDAGSAPLKSSGQHQNDKGKNVRQRNSS. 2 positions are modified to phosphoserine: Ser362 and Ser368.

As to quaternary structure, homooligomer. Interacts with NXNL1. Interacts with SLC2A1 and SLC16A1/GLUT1. Interacts with XKR8; promoting its localization at the cell membrane. (Microbial infection) Interacts with P.falciparum (isolate 3D7) RH5/PfRH5; the interaction is required for the invasion of the host erythrocytes by the parasite at the merozoite stage. In terms of assembly, homooligomer. Forms heterooligomers with isoform 3. Interacts with VEGFA and KDR/VEGFR2. Interacts with PPIA/CYPA. Interacts with PPIL2; regulates BSG transport to the cell membrane. Interacts with SLC16A1; interaction mediates SLC16A3 targeting to the plasma membrane. Interacts with SLC16A12. Interacts with SLC16A11. Interacts with AJAP1. Interacts with SLC1A3, ATP1B2, MAG and L1CAM. Interacts with SLC16A3; interaction mediates SLC16A3 targeting to the plasma membrane. As to quaternary structure, (Microbial infection) Interacts with P.falciparum (isolates 3D7 or 7G8) RH5/PfRH5; the interaction is required for the invasion of the host erythrocytes by the parasite at the merozoite stage. (Microbial infection) Does not interact with severe acute respiratory syndrome coronavirus 2 (SARS-CoV-2) spike glycoprotein, even if previous works were based on a putative interaction. In terms of assembly, forms heterooligomers with isoform 2. As to quaternary structure, interacts with SLC16A6; this interaction mediates targeting to the plasma membrane. N-glycosylated. In terms of tissue distribution, retina-specific. Expressed in retinal cone photoreceptors (at protein level). Expressed in erythrocytes (at protein level). Highly expressed in melanoma cell lines (at protein level). Highly expressed in the heart, kidney, skeletal muscle and testis. As to expression, highly expressed in the bone marrow, fetal liver, lung, testis and thymus.

Its subcellular location is the melanosome. It is found in the cell membrane. The protein localises to the photoreceptor inner segment. It localises to the cell projection. The protein resides in the cilium. Its subcellular location is the photoreceptor outer segment. It is found in the endosome. The protein localises to the endoplasmic reticulum membrane. It localises to the basolateral cell membrane. In terms of biological role, essential for normal retinal maturation and development. Acts as a retinal cell surface receptor for NXNL1 and plays an important role in NXNL1-mediated survival of retinal cone photoreceptors. In association with glucose transporter SLC16A1/GLUT1 and NXNL1, promotes retinal cone survival by enhancing aerobic glycolysis and accelerating the entry of glucose into photoreceptors. May act as a potent stimulator of IL6 secretion in multiple cell lines that include monocytes. Its function is as follows. (Microbial infection) Erythrocyte receptor for P.falciparum RH5 which is essential for erythrocyte invasion by the merozoite stage of P.falciparum isolates 3D7 and Dd2. Functionally, signaling receptor for cyclophilins, essential for PPIA/CYPA and PPIB/CYPB-dependent signaling related to chemotaxis and adhesion of immune cells. Plays an important role in targeting monocarboxylate transporters SLC16A1/GLUT1, SLC16A11 and SLC16A12 to the plasma membrane. Acts as a coreceptor for vascular endothelial growth factor receptor 2 (KDR/VEGFR2) in endothelial cells enhancing its VEGFA-mediated activation and downstream signaling. Promotes angiogenesis through EPAS1/HIF2A-mediated up-regulation of VEGFA (isoform VEGF-165 and VEGF-121) and KDR/VEGFR2 in endothelial cells. Plays a key role in regulating tumor growth, invasion, metastasis and neoangiogenesis by stimulating the production and release of extracellular matrix metalloproteinases and KDR/VEGFR2 by both tumor cells and stromal cells (fibroblasts and endothelial cells). (Microbial infection) Erythrocyte receptor for P.falciparum RH5 which is essential for erythrocyte invasion by the merozoite stage of P.falciparum isolates 3D7, Dd2, 7G8 and HB3. Binding of P.falciparum RH5 results in BSG dimerization which triggers an increase in intracellular Ca(2+) in the erythrocyte. This essential step leads to a rearrangement of the erythrocyte cytoskeleton required for the merozoite invasion. In terms of biological role, (Microbial infection) Can facilitate human SARS coronavirus (SARS-CoV-1) infection via its interaction with virus-associated PPIA/CYPA. Its function is as follows. (Microbial infection) Can facilitate HIV-1 infection via its interaction with virus-associated PPIA/CYPA. Functionally, (Microbial infection) First described as a receptor for severe acute respiratory syndrome coronavirus 2 (SARS-CoV-2), it is not required for SARS-CoV-2 infection. (Microbial infection) Acts as a receptor for measles virus. In terms of biological role, (Microbial infection) Promotes entry of pentamer-expressing human cytomegalovirus (HCMV) into epithelial and endothelial cells. The sequence is that of Basigin from Homo sapiens (Human).